The sequence spans 141 residues: Hemoglobin subunit alpha-2 (141 aa).

Residues 1–141 (VLTDAERKEV…VATVLTSKYR (141 aa)) enclose the Globin domain. H58 is a binding site for O2. Heme b is bound at residue H87.

This sequence belongs to the globin family. In terms of assembly, heterotetramer of two alpha chains and two beta chains. As to expression, red blood cells.

Functionally, involved in oxygen transport from the lung to the various peripheral tissues. The chain is Hemoglobin subunit alpha-2 from Tachyglossus aculeatus aculeatus (Southeast Australian short-beaked echidna).